Here is a 412-residue protein sequence, read N- to C-terminus: O-acetyl-L-homoserine sulfhydrylase 2 (412 aa).

Lysine 202 bears the N6-(pyridoxal phosphate)lysine mark.

It belongs to the trans-sulfuration enzymes family. In terms of assembly, homotetramer. Pyridoxal 5'-phosphate serves as cofactor.

The catalysed reaction is O-acetyl-L-homoserine + hydrogen sulfide = L-homocysteine + acetate. Inhibited by the carbonyl reagents hydroxylamine and phenylhydrazine. Also inhibited by methionine and propargylglycine. In terms of biological role, catalyzes the conversion of O-acetyl-L-homoserine (OAH) into homocysteine in the methionine biosynthesis pathway. Has weak activity with O-acetyl-L-serine, O-phospho-L-serine, L-serine, O-succinyl-L-homoserine and L-homoserine. Shows a very low CTT gamma-synthase activity. The protein is O-acetyl-L-homoserine sulfhydrylase 2 of Thermus thermophilus (strain ATCC 27634 / DSM 579 / HB8).